Here is a 412-residue protein sequence, read N- to C-terminus: Branched-chain alpha-ketoacid dehydrogenase kinase (412 aa).

A mitochondrion-targeting transit peptide spans 1–30 (MILTSVLGSGPRSWSSLWPLLGSSLSLRAR). Ser31 carries the post-translational modification Phosphoserine. Ser52 is subject to Phosphoserine; by autocatalysis. The Histidine kinase domain occupies 159–404 (LDDHKDVVTL…DVYLRLRHID (246 aa)). 2 positions are modified to N6-acetyllysine: Lys192 and Lys233. 2 residues coordinate ATP: Asn279 and Asp315. Residue Asn279 coordinates Mg(2+). Val328, Asp330, and Phe333 together coordinate K(+). Thr334 and Thr335 together coordinate ATP. Ser356 and Ser360 each carry phosphoserine. ATP is bound by residues His364, Gly367, and Leu370. A K(+)-binding site is contributed by Gly367.

This sequence belongs to the PDK/BCKDK protein kinase family. As to quaternary structure, homodimer. Homotetramer. Dimerizes through interaction of two opposing nucleotide-binding domains. Interacts with E2 component of the branched-chain alpha-ketoacid dehydrogenase (BCKDH) complex. Competes with BCKDK for binding to the E2 component; this interaction is modulated by branched-chain alpha-keto acids. At steady state, BCKDH holoenzyme contains BCKDK and BCKDHA is phosphorylated. In response to high levels of branched-chain alpha-keto acids, the inhibitory BCKDK is replaced by activating PPM1K leading to BCKDHA dephosphorylation and BCAA degradation. Post-translationally, autophosphorylated. Ubiquitous.

Its subcellular location is the mitochondrion matrix. The protein resides in the mitochondrion. The enzyme catalyses L-seryl-[3-methyl-2-oxobutanoate dehydrogenase] + ATP = O-phospho-L-seryl-[3-methyl-2-oxobutanoate dehydrogenase] + ADP + H(+). It carries out the reaction L-seryl-[protein] + ATP = O-phospho-L-seryl-[protein] + ADP + H(+). Serine/threonine-protein kinase component of macronutrients metabolism. Forms a functional kinase and phosphatase pair with PPM1K, serving as a metabolic regulatory node that coordinates branched-chain amino acids (BCAAs) with glucose and lipid metabolism via two distinct phosphoprotein targets: mitochondrial BCKDHA subunit of the branched-chain alpha-ketoacid dehydrogenase (BCKDH) complex and cytosolic ACLY, a lipogenic enzyme of Krebs cycle. Phosphorylates and inactivates mitochondrial BCKDH complex a multisubunit complex consisting of three multimeric components each involved in different steps of BCAA catabolism: E1 composed of BCKDHA and BCKDHB, E2 core composed of DBT monomers, and E3 composed of DLD monomers. Associates with the E2 component of BCKDH complex and phosphorylates BCKDHA on Ser-334, leading to conformational changes that interrupt substrate channeling between E1 and E2 and inactivates the BCKDH complex. Phosphorylates ACLY on Ser-455 in response to changes in cellular carbohydrate abundance such as occurs during fasting to feeding metabolic transition. Refeeding stimulates MLXIPL/ChREBP transcription factor, leading to increased BCKDK to PPM1K expression ratio, phosphorylation and activation of ACLY that ultimately results in the generation of malonyl-CoA and oxaloacetate immediate substrates of de novo lipogenesis and glucogenesis, respectively. Recognizes phosphosites having SxxE/D canonical motif. This chain is Branched-chain alpha-ketoacid dehydrogenase kinase (Bckdk), found in Mus musculus (Mouse).